Reading from the N-terminus, the 334-residue chain is Proline-serine-threonine phosphatase-interacting protein 2 (334 aa).

The F-BAR domain maps to 4 to 264 (SLFKGNFWSA…SLEMCSIQRD (261 aa)). Residues 66–166 (GQSEINTLKR…AVSRSANLVN (101 aa)) are a coiled coil. The interval 295-322 (VPAGKATGPNLARRGPLPIPKSSPDDPN) is disordered. Phosphotyrosine is present on residues Y323 and Y329.

In terms of processing, phosphorylated on tyrosine.

The protein localises to the cytoplasm. The protein resides in the membrane. Its function is as follows. Binds to F-actin. May be involved in regulation of the actin cytoskeleton. The protein is Proline-serine-threonine phosphatase-interacting protein 2 (PSTPIP2) of Homo sapiens (Human).